The following is a 335-amino-acid chain: MAFNLRNRSFLTLADFNTREMEYMLDLAEDLKKAKYAGYEGKNLKGKNIALIFEKSSTRTRCSFEVGAKDEGAHVTYLGPSGSHIGHKESVKDTARVLGGMFDGIEYRGFSQRNVEILAKYSGVPVWNGLTDEDHPTQVLADFLTAHEVLKKPYKDIKFAFVGDGQDNVSNALMLGAAVMGMEYHVVTPKELEPTKETLDKANEIAAKTGAKIVVTNDIKEGVKGMDVIYADVWVSMGESDDMWEKRINLLKPYQVTMDVMKATENPNVLFEHCLPAFHNLDTEVGKEIEKKFGLKEMEVTDEVFESEHSVVFREAENRMHTIKAVMVATLGEQN.

Residues serine 57–threonine 60, arginine 108, and histidine 135–glutamine 138 each bind carbamoyl phosphate. L-ornithine is bound by residues asparagine 168, aspartate 232, and serine 236–methionine 237. Residues cysteine 274 to leucine 275 and arginine 319 contribute to the carbamoyl phosphate site.

It belongs to the aspartate/ornithine carbamoyltransferase superfamily. OTCase family.

Its subcellular location is the cytoplasm. The catalysed reaction is carbamoyl phosphate + L-ornithine = L-citrulline + phosphate + H(+). Its pathway is amino-acid degradation; L-arginine degradation via ADI pathway; carbamoyl phosphate from L-arginine: step 2/2. Functionally, reversibly catalyzes the transfer of the carbamoyl group from carbamoyl phosphate (CP) to the N(epsilon) atom of ornithine (ORN) to produce L-citrulline. This chain is Ornithine carbamoyltransferase, found in Limosilactobacillus reuteri (strain DSM 20016) (Lactobacillus reuteri).